Here is a 307-residue protein sequence, read N- to C-terminus: Transcription initiation factor IIB 5 (307 aa).

The segment at 19–47 (TTEPCPECGGPVRTNSAETVCADCGLIID) adopts a TFIIB-type zinc-finger fold. Positions 23, 26, 39, and 42 each coordinate Zn(2+). 2 stretches are compositionally biased toward basic and acidic residues: residues 54–66 (GPEW…DTAK) and 107–121 (MRRE…STKE). Positions 54 to 121 (GPEWHRDDAD…SRGRWRSTKE (68 aa)) are disordered. Tandem repeats lie at residues 129–212 (TEIR…NEEL) and 223–304 (QFVP…RLLS).

Belongs to the TFIIB family.

Its function is as follows. Stabilizes TBP binding to an archaeal box-A promoter. Also responsible for recruiting RNA polymerase II to the pre-initiation complex (DNA-TBP-TFIIB). In Halobacterium salinarum (strain ATCC 700922 / JCM 11081 / NRC-1) (Halobacterium halobium), this protein is Transcription initiation factor IIB 5.